The sequence spans 448 residues: Glucose-6-phosphate isomerase (448 aa).

Catalysis depends on glutamate 290, which acts as the Proton donor. Catalysis depends on residues histidine 311 and lysine 425.

The protein belongs to the GPI family.

It localises to the cytoplasm. It carries out the reaction alpha-D-glucose 6-phosphate = beta-D-fructose 6-phosphate. It functions in the pathway carbohydrate biosynthesis; gluconeogenesis. The protein operates within carbohydrate degradation; glycolysis; D-glyceraldehyde 3-phosphate and glycerone phosphate from D-glucose: step 2/4. In terms of biological role, catalyzes the reversible isomerization of glucose-6-phosphate to fructose-6-phosphate. The polypeptide is Glucose-6-phosphate isomerase (Latilactobacillus sakei subsp. sakei (strain 23K) (Lactobacillus sakei subsp. sakei)).